A 537-amino-acid chain; its full sequence is Chaperonin GroEL (537 aa).

ATP is bound by residues 29 to 32, 86 to 90, Gly413, and Asp492; these read TLGP and DGTTT.

The protein belongs to the chaperonin (HSP60) family. In terms of assembly, forms a cylinder of 14 subunits composed of two heptameric rings stacked back-to-back. Interacts with the co-chaperonin GroES.

The protein resides in the cytoplasm. It catalyses the reaction ATP + H2O + a folded polypeptide = ADP + phosphate + an unfolded polypeptide.. Its function is as follows. Together with its co-chaperonin GroES, plays an essential role in assisting protein folding. The GroEL-GroES system forms a nano-cage that allows encapsulation of the non-native substrate proteins and provides a physical environment optimized to promote and accelerate protein folding. This is Chaperonin GroEL from Dehalococcoides mccartyi (strain ATCC BAA-2100 / JCM 16839 / KCTC 5957 / BAV1).